The primary structure comprises 256 residues: ATP synthase subunit a (256 aa).

The propeptide at Met-1 to Leu-8 is removed in mature form. Helical transmembrane passes span Ile-34–Leu-54, Tyr-92–Val-112, His-121–Leu-141, Phe-148–Ile-168, Ala-186–Met-206, Gly-209–Leu-229, and Glu-230–Lys-250.

The protein belongs to the ATPase A chain family. In terms of assembly, F-type ATPases have 2 components, CF(1) - the catalytic core - and CF(0) - the membrane proton channel. CF(1) has five subunits: alpha(3), beta(3), gamma(1), delta(1), epsilon(1). CF(0) has three main subunits: a, b and c.

The protein resides in the mitochondrion inner membrane. Mitochondrial membrane ATP synthase (F(1)F(0) ATP synthase or Complex V) produces ATP from ADP in the presence of a proton gradient across the membrane which is generated by electron transport complexes of the respiratory chain. F-type ATPases consist of two structural domains, F(1) - containing the extramembraneous catalytic core and F(0) - containing the membrane proton channel, linked together by a central stalk and a peripheral stalk. During catalysis, ATP synthesis in the catalytic domain of F(1) is coupled via a rotary mechanism of the central stalk subunits to proton translocation. Key component of the proton channel; it may play a direct role in the translocation of protons across the membrane. This Emericella nidulans (Aspergillus nidulans) protein is ATP synthase subunit a (atp6).